We begin with the raw amino-acid sequence, 215 residues long: Ribosomal RNA small subunit methyltransferase G (215 aa).

S-adenosyl-L-methionine is bound by residues glycine 78, leucine 83, 128-129, and arginine 146; that span reads AE.

The protein belongs to the methyltransferase superfamily. RNA methyltransferase RsmG family.

The protein localises to the cytoplasm. The catalysed reaction is guanosine(527) in 16S rRNA + S-adenosyl-L-methionine = N(7)-methylguanosine(527) in 16S rRNA + S-adenosyl-L-homocysteine. Specifically methylates the N7 position of guanine in position 527 of 16S rRNA. This is Ribosomal RNA small subunit methyltransferase G from Anaeromyxobacter sp. (strain Fw109-5).